Consider the following 308-residue polypeptide: Acetaldehyde dehydrogenase (308 aa).

14–17 (TGNI) is an NAD(+) binding site. The Acyl-thioester intermediate role is filled by Cys-129. NAD(+)-binding positions include 160-168 (SAGPGTRQN) and Asn-280.

Belongs to the acetaldehyde dehydrogenase family.

The catalysed reaction is acetaldehyde + NAD(+) + CoA = acetyl-CoA + NADH + H(+). The protein is Acetaldehyde dehydrogenase of Thermomicrobium roseum (strain ATCC 27502 / DSM 5159 / P-2).